The sequence spans 364 residues: Alanine racemase (364 aa).

Catalysis depends on Lys-35, which acts as the Proton acceptor; specific for D-alanine. Lys-35 is modified (N6-(pyridoxal phosphate)lysine). Arg-136 contacts substrate. The active-site Proton acceptor; specific for L-alanine is the Tyr-261. Met-309 is a substrate binding site.

The protein belongs to the alanine racemase family. Requires pyridoxal 5'-phosphate as cofactor.

It carries out the reaction L-alanine = D-alanine. The protein operates within amino-acid biosynthesis; D-alanine biosynthesis; D-alanine from L-alanine: step 1/1. In terms of biological role, catalyzes the interconversion of L-alanine and D-alanine. May also act on other amino acids. This Shewanella amazonensis (strain ATCC BAA-1098 / SB2B) protein is Alanine racemase (alr).